We begin with the raw amino-acid sequence, 101 residues long: Urease subunit beta (101 aa).

It belongs to the urease beta subunit family. As to quaternary structure, heterotrimer of UreA (gamma), UreB (beta) and UreC (alpha) subunits. Three heterotrimers associate to form the active enzyme.

Its subcellular location is the cytoplasm. It carries out the reaction urea + 2 H2O + H(+) = hydrogencarbonate + 2 NH4(+). Its pathway is nitrogen metabolism; urea degradation; CO(2) and NH(3) from urea (urease route): step 1/1. This Pseudomonas fluorescens (strain SBW25) protein is Urease subunit beta.